The primary structure comprises 726 residues: Transferrin (726 aa).

The N-terminal stretch at 1-16 (MLLCLTLLFSASAVLA) is a signal peptide. 2 consecutive Transferrin-like domains span residues 29–367 (YKVC…ERDT) and 374–719 (VRFC…VIRA). 2 disulfides stabilise this stretch: Cys32–Cys63 and Cys41–Cys54. Residues Asp78 and Tyr111 each coordinate Fe(3+). 4 disulfide bridges follow: Cys135/Cys231, Cys184/Cys210, Cys207/Cys216, and Cys274/Cys287. 4 residues coordinate hydrogencarbonate: Thr137, Arg141, Val143, and Gly144. Residue Asn162 is glycosylated (N-linked (GlcNAc...) asparagine). A Fe(3+)-binding site is contributed by Tyr225. Residues Asn337 and Asn358 are each glycosylated (N-linked (GlcNAc...) asparagine). 2 cysteine pairs are disulfide-bonded: Cys377–Cys414 and Cys387–Cys405. Residues Asp429 and Tyr457 each contribute to the Fe(3+) site. Cys481 and Cys562 are oxidised to a cystine. Hydrogencarbonate is bound by residues Thr483, Arg487, Ala489, and Gly490. Tyr573 and His642 together coordinate Fe(3+).

The protein belongs to the transferrin family.

It localises to the secreted. In terms of biological role, transferrins are iron binding transport proteins which bind Fe(3+) ion in association with the binding of an anion, usually bicarbonate. This chain is Transferrin, found in Blaberus discoidalis (Tropical cockroach).